A 505-amino-acid polypeptide reads, in one-letter code: Serine/threonine-protein kinase D (505 aa).

A Protein kinase domain is found at Tyr9 to Ile271. ATP contacts are provided by residues Leu15–Thr23 and Lys40. Asp136 functions as the Proton acceptor in the catalytic mechanism. The SH3b domain occupies Gly436 to Phe505.

This sequence belongs to the protein kinase superfamily. Ser/Thr protein kinase family.

It carries out the reaction L-seryl-[protein] + ATP = O-phospho-L-seryl-[protein] + ADP + H(+). It catalyses the reaction L-threonyl-[protein] + ATP = O-phospho-L-threonyl-[protein] + ADP + H(+). This is Serine/threonine-protein kinase D (spkD) from Synechocystis sp. (strain ATCC 27184 / PCC 6803 / Kazusa).